We begin with the raw amino-acid sequence, 432 residues long: MTVYHFVGIKGTGMSPLAQILHDTGYTVQGSDIEKHIFTQKALEERNIKILPFDPDNIQPGMTVIAGNAFPDTHPEIERALSEGIPVIRYHKFLGEYMDSFTNVAITGAHGKTSTTGLLAHVMQSAKPTSYLIGDGSGMGKENSEYFVFEACEYRRHFLSYHPDYAIMTNIDFDHPDYFSDIDDVFDAFQNMALQVKKAIIACGDDEHLPKIQAKVPVVYYGFNEENDFQARNVVKNTEGTTFDVFVRNTFYDTFYIPAYGNHNVLNSLAVIALCHYESIDVELIKGALTTFGGVKRRFNEKVVGAQVLIDDYAHHPTEIEVTIEAARQKYPDREIVAVFQPHTFTRTQQFLSEFADSLKKADYVYLCDIFGSARENIGKLSIEDLREKIPQAQLIAEEDTSVLKAHKDGILIFMGAGDIQKYLRAYEKVAV.

108-114 is a binding site for ATP; it reads GAHGKTS.

The protein belongs to the MurCDEF family.

The protein localises to the cytoplasm. It catalyses the reaction UDP-N-acetyl-alpha-D-muramate + L-alanine + ATP = UDP-N-acetyl-alpha-D-muramoyl-L-alanine + ADP + phosphate + H(+). The protein operates within cell wall biogenesis; peptidoglycan biosynthesis. Its function is as follows. Cell wall formation. This chain is UDP-N-acetylmuramate--L-alanine ligase, found in Bacillus pumilus (strain SAFR-032).